A 90-amino-acid chain; its full sequence is MSFLNVFSSRPTPKQVAKDRLKVILIHDRGELSDEVLDKIRLEILDVLSKYVEIENEDVDITVTKSNPIEGESPSLVANIPIKNIKGKAR.

It belongs to the MinE family.

Its function is as follows. Prevents the cell division inhibition by proteins MinC and MinD at internal division sites while permitting inhibition at polar sites. This ensures cell division at the proper site by restricting the formation of a division septum at the midpoint of the long axis of the cell. This is Cell division topological specificity factor from Clostridium perfringens (strain ATCC 13124 / DSM 756 / JCM 1290 / NCIMB 6125 / NCTC 8237 / Type A).